A 346-amino-acid chain; its full sequence is Glycerol-3-phosphate dehydrogenase [NAD(P)+] (346 aa).

The NADPH site is built by serine 11, tryptophan 12, histidine 32, arginine 33, and lysine 106. 3 residues coordinate sn-glycerol 3-phosphate: lysine 106, glycine 137, and serine 139. Alanine 141 lines the NADPH pocket. 5 residues coordinate sn-glycerol 3-phosphate: lysine 193, aspartate 246, serine 256, arginine 257, and asparagine 258. Lysine 193 functions as the Proton acceptor in the catalytic mechanism. Arginine 257 is a binding site for NADPH. Residues valine 281 and glutamate 283 each coordinate NADPH.

Belongs to the NAD-dependent glycerol-3-phosphate dehydrogenase family.

Its subcellular location is the cytoplasm. It carries out the reaction sn-glycerol 3-phosphate + NAD(+) = dihydroxyacetone phosphate + NADH + H(+). It catalyses the reaction sn-glycerol 3-phosphate + NADP(+) = dihydroxyacetone phosphate + NADPH + H(+). Its pathway is membrane lipid metabolism; glycerophospholipid metabolism. In terms of biological role, catalyzes the reduction of the glycolytic intermediate dihydroxyacetone phosphate (DHAP) to sn-glycerol 3-phosphate (G3P), the key precursor for phospholipid synthesis. This is Glycerol-3-phosphate dehydrogenase [NAD(P)+] from Bacillus licheniformis (strain ATCC 14580 / DSM 13 / JCM 2505 / CCUG 7422 / NBRC 12200 / NCIMB 9375 / NCTC 10341 / NRRL NRS-1264 / Gibson 46).